An 887-amino-acid polypeptide reads, in one-letter code: Probable dual specificity protein kinase madd-3 (887 aa).

5 disordered regions span residues 77 to 147 (PIKS…ISAA), 163 to 299 (AQPP…PKAL), 313 to 333 (LPQS…STGG), 347 to 475 (TTIC…KSAA), and 504 to 533 (RKPS…QHQD). A compositionally biased stretch (low complexity) spans 108 to 118 (PTQNPVQLPLP). A compositionally biased stretch (basic and acidic residues) spans 121 to 130 (VSEKPGDKKS). Over residues 177 to 192 (SETNSGSGPVSKQVSG) the composition is skewed to polar residues. Positions 217-241 (SSASTRAKAASAVAPEANPAPVPTA) are enriched in low complexity. Polar residues-rich tracts occupy residues 314-332 (PQSS…TSTG) and 356-366 (NVPSTSQPQQG). Residues 367–377 (DNEKRLIEKKL) are compositionally biased toward basic and acidic residues. Low complexity predominate over residues 407–419 (LSSNLTTTNNNNN). Residues 439 to 462 (FSTQAGSGNATTVDDPASTTTSKE) show a composition bias toward polar residues. Positions 551–863 (FTIYDTLGEG…LPEALQHRYF (313 aa)) constitute a Protein kinase domain. ATP is bound by residues 557–565 (LGEGTFGKV) and lysine 580. Aspartate 677 functions as the Proton acceptor in the catalytic mechanism.

Belongs to the protein kinase superfamily. CMGC Ser/Thr protein kinase family. Lammer subfamily. Expressed in body wall, vulval and anal depressor muscles.

The protein resides in the cytoplasm. The protein localises to the nucleus. In terms of biological role, probable dual specificity kinase acting on both serine/threonine and tyrosine-containing substrates. Negatively regulates p38 MAPK signaling to allow for the plasma membrane of body wall muscle cells to form projections, also called muscle arms, that extend and connect the body wall muscles to target motor neurons. Negative regulation of p38 MAPK signaling may in turn modulate the trafficking of the muscle specific receptor eva-1 to the lysosome, to ensure proper display of the eva-1 receptor on the plasma membrane of muscle cells and allow for muscle arm extension towards guidance cues. The chain is Probable dual specificity protein kinase madd-3 from Caenorhabditis elegans.